Reading from the N-terminus, the 337-residue chain is Delta-aminolevulinic acid dehydratase (337 aa).

K205 serves as the catalytic Schiff-base intermediate with substrate. The 5-aminolevulinate site is built by R215 and K229. E245 is a binding site for Mg(2+). Residue K260 is the Schiff-base intermediate with substrate of the active site. Positions 286 and 324 each coordinate 5-aminolevulinate.

This sequence belongs to the ALAD family. In terms of assembly, homooctamer; formed by oligomerization of dimers. The cofactor is Mg(2+).

It catalyses the reaction 2 5-aminolevulinate = porphobilinogen + 2 H2O + H(+). The protein operates within porphyrin-containing compound metabolism; protoporphyrin-IX biosynthesis; coproporphyrinogen-III from 5-aminolevulinate: step 1/4. Its activity is regulated as follows. Stimulated by magnesium ions. Its function is as follows. Catalyzes an early step in the biosynthesis of tetrapyrroles. Binds two molecules of 5-aminolevulinate per subunit, each at a distinct site, and catalyzes their condensation to form porphobilinogen. This Pseudomonas aeruginosa (strain ATCC 15692 / DSM 22644 / CIP 104116 / JCM 14847 / LMG 12228 / 1C / PRS 101 / PAO1) protein is Delta-aminolevulinic acid dehydratase (hemB).